The sequence spans 826 residues: Disintegrin and metalloproteinase domain-containing protein 8 (826 aa).

Positions 1–16 (MLGLWLLSVLWTPAVA) are cleaved as a signal peptide. The Extracellular portion of the chain corresponds to 17 to 658 (PGPPLPHVKQ…VSDEQAASTS (642 aa)). N-linked (GlcNAc...) asparagine glycosylation is found at Asn-89 and Asn-260. One can recognise a Peptidase M12B domain in the interval 196–395 (RYVELYVVAD…PQTGCLTNVP (200 aa)). Intrachain disulfides connect Cys-305-Cys-390, Cys-346-Cys-374, Cys-348-Cys-357, Cys-430-Cys-452, Cys-443-Cys-449, Cys-461-Cys-481, Cys-468-Cys-498, Cys-493-Cys-503, Cys-563-Cys-615, Cys-615-Cys-625, Cys-619-Cys-631, and Cys-633-Cys-642. Residue His-329 coordinates Zn(2+). Glu-330 is an active-site residue. His-333 and His-339 together coordinate Zn(2+). The Disintegrin domain maps to 403-489 (GPVCGNLFVE…TCPEDAFQQN (87 aa)). Asn-431 carries N-linked (GlcNAc...) asparagine glycosylation. The 33-residue stretch at 611–643 (RSENCSAKCNNHGVCNHKRECHCHKGWAPPNCV) folds into the EGF-like domain. An N-linked (GlcNAc...) asparagine glycan is attached at Asn-614. A helical membrane pass occupies residues 659 to 683 (LPVSVVVVLVILVAAMVIVAGIVIY). Topologically, residues 684-826 (RKAPRQIQRR…VALKVPIQKR (143 aa)) are cytoplasmic. A disordered region spans residues 701–826 (SGLSNPLFYT…VALKVPIQKR (126 aa)). Over residues 733 to 748 (PPRPIVKPKRPPPAPP) the composition is skewed to pro residues. Residues 749-763 (GAVSSSPLPVPVYAP) are compositionally biased toward low complexity.

As to quaternary structure, interacts with FST3. It depends on Zn(2+) as a cofactor. In terms of tissue distribution, macrophages.

It localises to the membrane. Possible involvement in extravasation of leukocytes. In Mus musculus (Mouse), this protein is Disintegrin and metalloproteinase domain-containing protein 8 (Adam8).